Reading from the N-terminus, the 175-residue chain is Nucleoside-triphosphatase THEP1 (175 aa).

Residues 8 to 15 and 99 to 106 contribute to the ATP site; these read GSPGVGKS and LVVIDEIG.

This sequence belongs to the THEP1 NTPase family.

It carries out the reaction a ribonucleoside 5'-triphosphate + H2O = a ribonucleoside 5'-diphosphate + phosphate + H(+). Functionally, has nucleotide phosphatase activity towards ATP, GTP, CTP, TTP and UTP. May hydrolyze nucleoside diphosphates with lower efficiency. The sequence is that of Nucleoside-triphosphatase THEP1 from Methanosarcina acetivorans (strain ATCC 35395 / DSM 2834 / JCM 12185 / C2A).